The sequence spans 323 residues: tRNA U34 carboxymethyltransferase (323 aa).

Residues Lys-91, Trp-105, Lys-110, Gly-130, Asp-152–Thr-154, Ile-181–Glu-182, Met-196, Tyr-200, and Arg-315 contribute to the carboxy-S-adenosyl-L-methionine site.

This sequence belongs to the class I-like SAM-binding methyltransferase superfamily. CmoB family. As to quaternary structure, homotetramer.

It catalyses the reaction carboxy-S-adenosyl-L-methionine + 5-hydroxyuridine(34) in tRNA = 5-carboxymethoxyuridine(34) in tRNA + S-adenosyl-L-homocysteine + H(+). Functionally, catalyzes carboxymethyl transfer from carboxy-S-adenosyl-L-methionine (Cx-SAM) to 5-hydroxyuridine (ho5U) to form 5-carboxymethoxyuridine (cmo5U) at position 34 in tRNAs. In Escherichia coli O81 (strain ED1a), this protein is tRNA U34 carboxymethyltransferase.